Consider the following 224-residue polypeptide: ATP-dependent dethiobiotin synthetase BioD (224 aa).

12–17 is an ATP binding site; that stretch reads EVGKTV. T16 is a Mg(2+) binding site. The active site involves K34. T38 provides a ligand contact to substrate. ATP contacts are provided by residues D47, 106 to 109, 166 to 167, and 196 to 198; these read EGAG, GS, and PEG. Mg(2+)-binding residues include D47 and E106.

This sequence belongs to the dethiobiotin synthetase family. As to quaternary structure, homodimer. Mg(2+) is required as a cofactor.

It localises to the cytoplasm. The enzyme catalyses (7R,8S)-7,8-diammoniononanoate + CO2 + ATP = (4R,5S)-dethiobiotin + ADP + phosphate + 3 H(+). The protein operates within cofactor biosynthesis; biotin biosynthesis; biotin from 7,8-diaminononanoate: step 1/2. Its function is as follows. Catalyzes a mechanistically unusual reaction, the ATP-dependent insertion of CO2 between the N7 and N8 nitrogen atoms of 7,8-diaminopelargonic acid (DAPA, also called 7,8-diammoniononanoate) to form a ureido ring. The chain is ATP-dependent dethiobiotin synthetase BioD from Saccharopolyspora erythraea (strain ATCC 11635 / DSM 40517 / JCM 4748 / NBRC 13426 / NCIMB 8594 / NRRL 2338).